The chain runs to 130 residues: Serum amyloid A protein (130 aa).

The first 18 residues, 1-18 (MKLFTGLILCSLVLGVHS), serve as a signal peptide directing secretion. Q19 bears the Pyrrolidone carboxylic acid mark. A disordered region spans residues 86–130 (TDPLFKGTTSGQGQEDSRADQAANEWGRSGKDPNHFRPAGLPDKY).

Belongs to the SAA family. In terms of processing, this protein is the precursor of amyloid protein A, which is formed by the removal of residues from the C-terminal end. In terms of tissue distribution, expressed by the liver; secreted in plasma.

The protein resides in the secreted. Major acute phase reactant. Apolipoprotein of the HDL complex. This Bos taurus (Bovine) protein is Serum amyloid A protein (SAA1).